The sequence spans 249 residues: 3alpha-hydroxy bile acid-CoA-ester 3-dehydrogenase 2 (249 aa).

NAD(+) contacts are provided by residues 15–18 (TRGI), glutamate 38, glutamate 42, and asparagine 92. Serine 144 provides a ligand contact to substrate. Catalysis depends on proton donor/acceptor residues tyrosine 157 and lysine 161. Residues lysine 161 and 190-192 (VNT) contribute to the NAD(+) site.

Belongs to the short-chain dehydrogenases/reductases (SDR) family. As to quaternary structure, homotetramer.

It catalyses the reaction a 3alpha-hydroxy bile acid CoA + NAD(+) = a 3-oxo bile acid CoA + NADH + H(+). The catalysed reaction is choloyl-CoA + NAD(+) = 7alpha,12alpha-dihydroxy-3-oxochol-24-oyl-CoA + NADH + H(+). The enzyme catalyses chenodeoxycholoyl-CoA + NAD(+) = 7alpha-hydroxy-3-oxochol-24-oyl-CoA + NADH + H(+). It carries out the reaction deoxycholoyl-CoA + NAD(+) = 12alpha-hydroxy-3-oxocholan-24-oyl-CoA + NADH + H(+). It catalyses the reaction lithocholoyl-CoA + NAD(+) = 3-oxocholan-24-oyl-CoA + NADH + H(+). It participates in lipid metabolism; bile acid biosynthesis. In terms of biological role, involved in the multi-step bile acid 7alpha-dehydroxylation pathway that transforms primary bile acids to secondary bile acids in the human gut. Catalyzes the oxidation of C3-hydroxyl group of CoA conjugated bile acids generating a C3-oxo bile acid intermediate. Can use choloyl-CoA, chenodeoxycholoyl-CoA, deoxycholoyl-CoA, and lithocholoyl-CoA as substrates with similar efficiency. Highly prefers NAD over NADP as cosubstrate. Also catalyzes the reverse reactions; in vitro, the preferred direction of reaction depends on the pH. Has very little activity with unconjugated (non-CoA) bile acid substrates. This Clostridium scindens (strain JCM 10418 / VPI 12708) protein is 3alpha-hydroxy bile acid-CoA-ester 3-dehydrogenase 2 (baiA2).